Here is a 346-residue protein sequence, read N- to C-terminus: MSKRGARTPGFWYDNNTPIPLPARILVPVYGAAIALRRALYRRGWRKRHGVPVPVIVVGNVTAGGTGKTPLTIALVAKLQEAGWTPGVASRGYGRDEAGKARWVEADTPVALGGDEPVLIAWKTGARVRVDSDRLAAARALVEAGCDIVICDDGLQHYRLARDVEIEVVDGQRRYGNGRLLPAGPLREPVARARDCDFRVVNLGQASTTAAPQAPDDAGFGEWQMRLSIDSVQPMDGKRAQPLSMLAGQRVHAVAGIAYPERFFAMLRARGIGVVPHAFPDHHVYRAADFSFGSRLPVLMTEKDAVKCRPFADEWLYSVPLKAELPAAFWVSLLDRLNKLASRQGV.

62–69 (TAGGTGKT) contributes to the ATP binding site.

The protein belongs to the LpxK family.

The catalysed reaction is a lipid A disaccharide + ATP = a lipid IVA + ADP + H(+). Its pathway is glycolipid biosynthesis; lipid IV(A) biosynthesis; lipid IV(A) from (3R)-3-hydroxytetradecanoyl-[acyl-carrier-protein] and UDP-N-acetyl-alpha-D-glucosamine: step 6/6. In terms of biological role, transfers the gamma-phosphate of ATP to the 4'-position of a tetraacyldisaccharide 1-phosphate intermediate (termed DS-1-P) to form tetraacyldisaccharide 1,4'-bis-phosphate (lipid IVA). The chain is Tetraacyldisaccharide 4'-kinase from Xanthomonas oryzae pv. oryzae (strain MAFF 311018).